We begin with the raw amino-acid sequence, 150 residues long: Globin-2 A chain (150 aa).

Position 2 is a blocked amino end (Val) (valine 2). A Globin domain is found at 10-150 (CGSEAIKANL…ALVGVVQAAL (141 aa)). Histidine 102 contributes to the heme b binding site.

It belongs to the globin family. As to quaternary structure, heterotetramer of two alpha chains and two beta chains.

This chain is Globin-2 A chain, found in Anadara inaequivalvis (Inequivalve ark).